The following is a 276-amino-acid chain: Large ribosomal subunit protein uL2 (276 aa).

A disordered region spans residues 221–276 (RGSAMNPNDHPHGGGEGRAPIGRKSPMTPWGKKARGVKTRDRKKASNALIIRRRTK). Over residues 252–276 (KKARGVKTRDRKKASNALIIRRRTK) the composition is skewed to basic residues.

The protein belongs to the universal ribosomal protein uL2 family. Part of the 50S ribosomal subunit. Forms a bridge to the 30S subunit in the 70S ribosome.

Its function is as follows. One of the primary rRNA binding proteins. Required for association of the 30S and 50S subunits to form the 70S ribosome, for tRNA binding and peptide bond formation. It has been suggested to have peptidyltransferase activity; this is somewhat controversial. Makes several contacts with the 16S rRNA in the 70S ribosome. This chain is Large ribosomal subunit protein uL2, found in Onion yellows phytoplasma (strain OY-M).